The sequence spans 392 residues: Homoserine O-acetyltransferase (392 aa).

An AB hydrolase-1 domain is found at 52–356 (NVVVVLHALT…ICGHDGFLVE (305 aa)). Residue S157 is the Nucleophile of the active site. R227 provides a ligand contact to substrate. Residues D320 and H350 contribute to the active site. D351 contacts substrate. A disordered region spans residues 373-392 (SQSAGPGGAGPGSRKGTTRR).

It belongs to the AB hydrolase superfamily. MetX family. As to quaternary structure, homodimer.

The protein localises to the cytoplasm. It carries out the reaction L-homoserine + acetyl-CoA = O-acetyl-L-homoserine + CoA. It functions in the pathway amino-acid biosynthesis; L-methionine biosynthesis via de novo pathway; O-acetyl-L-homoserine from L-homoserine: step 1/1. Its function is as follows. Transfers an acetyl group from acetyl-CoA to L-homoserine, forming acetyl-L-homoserine. The chain is Homoserine O-acetyltransferase from Mycobacterium avium (strain 104).